A 388-amino-acid chain; its full sequence is Na(+)/H(+) antiporter NhaA (388 aa).

Topologically, residues 1–11 are cytoplasmic; sequence MKHLHRFFSSD. A helical transmembrane segment spans residues 12–31; sequence ASGGIILIIAAILAMIMANS. The Periplasmic segment spans residues 32–58; the sequence is GATSGWYHDFLETPVQLRVGSLEINKN. The helical transmembrane segment at 59–80 threads the bilayer; it reads MLLWINDALMAVFFLLVGLEVK. The Cytoplasmic portion of the chain corresponds to 81–96; sequence RELMQGSLASLRQAAF. The helical transmembrane segment at 97–116 threads the bilayer; that stretch reads PVIAAIGGMIVPALLYLAFN. The Periplasmic segment spans residues 117 to 122; that stretch reads YADPIT. A helical transmembrane segment spans residues 123–130; that stretch reads REGWAIPA. Over 131–154 the chain is Cytoplasmic; that stretch reads ATDIAFALGVLALLGSRVPLVLKI. The helical transmembrane segment at 155 to 176 threads the bilayer; it reads FLMALAIIDDLGAIIIIALFYT. The Periplasmic segment spans residues 177 to 180; it reads NDLS. A helical transmembrane segment spans residues 181 to 200; the sequence is MASLGVAAVAIAVLAVLNLC. The Cytoplasmic portion of the chain corresponds to 201–204; that stretch reads GVRR. The chain crosses the membrane as a helical span at residues 205-222; the sequence is TGVYILVGVVLWTAVLKS. Position 223 (G223) is a topological domain, periplasmic. A helical membrane pass occupies residues 224-236; it reads VHATLAGVIVGFF. Over 237–253 the chain is Cytoplasmic; the sequence is IPLKEKHGRSPAKRLEH. The chain crosses the membrane as a helical span at residues 254–272; the sequence is VLHPWVAYLILPLFAFANA. Residues 273 to 286 lie on the Periplasmic side of the membrane; that stretch reads GVSLQGVTLDGLTS. A helical transmembrane segment spans residues 287 to 310; that stretch reads ILPLGIIAGLLIGKPLGISLFCWL. The Cytoplasmic portion of the chain corresponds to 311–339; it reads ALRLKLAHLPEGTTYQQIMVVGILCGIGF. A helical membrane pass occupies residues 340 to 350; sequence TMSIFIASLAF. Topologically, residues 351–357 are periplasmic; sequence GSVDPEL. A helical membrane pass occupies residues 358–380; sequence INWAKLGILVGSISSAVIGYSWL. At 381–388 the chain is on the cytoplasmic side; it reads RVRLRPSV.

The protein belongs to the NhaA Na(+)/H(+) (TC 2.A.33) antiporter family.

Its subcellular location is the cell inner membrane. The catalysed reaction is Na(+)(in) + 2 H(+)(out) = Na(+)(out) + 2 H(+)(in). Na(+)/H(+) antiporter that extrudes sodium in exchange for external protons. This Shigella flexneri protein is Na(+)/H(+) antiporter NhaA.